Consider the following 228-residue polypeptide: Clathrin light chain B (228 aa).

Blocked amino end (Met) is present on Met-1. Residues 1-17 (MADDFGFFSSSESGAPE) are compositionally biased toward low complexity. Residues 1-80 (MADDFGFFSS…VNGDVFQEAN (80 aa)) are disordered. Phosphoserine is present on residues Ser-11 and Ser-13. The interval 92 to 154 (ADRLTQEPES…QVEKNKINNR (63 aa)) is involved in binding clathrin heavy chain. Phosphothreonine is present on Thr-186. Cysteines 198 and 208 form a disulfide. Lys-203 bears the N6-acetyllysine mark. Residue Ser-216 is modified to Phosphoserine.

Belongs to the clathrin light chain family. Clathrin coats are formed from molecules containing 3 heavy chains and 3 light chains. Interacts (via N-terminus) with HIP1. Interacts with HIP1R.

The protein resides in the cytoplasmic vesicle membrane. It localises to the membrane. The protein localises to the coated pit. Its function is as follows. Clathrin is the major protein of the polyhedral coat of coated pits and vesicles. This is Clathrin light chain B (CLTB) from Bos taurus (Bovine).